Consider the following 264-residue polypeptide: ORC1-type DNA replication protein 2 (264 aa).

ATP contacts are provided by residues 73 to 77 (TGKSL), Tyr220, and Arg232.

Belongs to the CDC6/cdc18 family.

Functionally, involved in regulation of DNA replication. This Halobacterium salinarum (strain ATCC 700922 / JCM 11081 / NRC-1) (Halobacterium halobium) protein is ORC1-type DNA replication protein 2 (orc2).